A 53-amino-acid polypeptide reads, in one-letter code: UPF0391 membrane protein YPDSF_3201 (53 aa).

Transmembrane regions (helical) follow at residues tryptophan 4–alanine 24 and alanine 27–phenylalanine 47.

Belongs to the UPF0391 family.

The protein localises to the cell membrane. In Yersinia pestis (strain Pestoides F), this protein is UPF0391 membrane protein YPDSF_3201.